Consider the following 381-residue polypeptide: Spermidine/putrescine import ATP-binding protein PotA (381 aa).

An ABC transporter domain is found at 22–252 (VELRNVFKFF…PKTSFVADFI (231 aa)). 54 to 61 (GPSGCGKT) contacts ATP.

Belongs to the ABC transporter superfamily. Spermidine/putrescine importer (TC 3.A.1.11.1) family. The complex is composed of two ATP-binding proteins (PotA), two transmembrane proteins (PotB and PotC) and a solute-binding protein (PotD).

The protein resides in the cell inner membrane. The catalysed reaction is ATP + H2O + polyamine-[polyamine-binding protein]Side 1 = ADP + phosphate + polyamineSide 2 + [polyamine-binding protein]Side 1.. Functionally, part of the ABC transporter complex PotABCD involved in spermidine/putrescine import. Responsible for energy coupling to the transport system. In Nostoc sp. (strain PCC 7120 / SAG 25.82 / UTEX 2576), this protein is Spermidine/putrescine import ATP-binding protein PotA.